Here is a 717-residue protein sequence, read N- to C-terminus: Fatty acid oxidation complex subunit alpha (717 aa).

Residues 1–190 (MIHAGNAITV…KDGAVDAVVS (190 aa)) are enoyl-CoA hydratase/isomerase. Aspartate 298 is a binding site for substrate. Residues 313–717 (HPVNQAAVLG…MAENNKKFYG (405 aa)) form a 3-hydroxyacyl-CoA dehydrogenase region. Residues methionine 326, aspartate 345, 402–404 (VTE), lysine 409, and serine 431 each bind NAD(+). Residue histidine 452 is the For 3-hydroxyacyl-CoA dehydrogenase activity of the active site. An NAD(+)-binding site is contributed by asparagine 455. Asparagine 502 is a binding site for substrate.

It in the N-terminal section; belongs to the enoyl-CoA hydratase/isomerase family. This sequence in the C-terminal section; belongs to the 3-hydroxyacyl-CoA dehydrogenase family. As to quaternary structure, heterotetramer of two alpha chains (FadB) and two beta chains (FadA).

The enzyme catalyses a (3S)-3-hydroxyacyl-CoA + NAD(+) = a 3-oxoacyl-CoA + NADH + H(+). The catalysed reaction is a (3S)-3-hydroxyacyl-CoA = a (2E)-enoyl-CoA + H2O. It catalyses the reaction a 4-saturated-(3S)-3-hydroxyacyl-CoA = a (3E)-enoyl-CoA + H2O. It carries out the reaction (3S)-3-hydroxybutanoyl-CoA = (3R)-3-hydroxybutanoyl-CoA. The enzyme catalyses a (3Z)-enoyl-CoA = a 4-saturated (2E)-enoyl-CoA. The catalysed reaction is a (3E)-enoyl-CoA = a 4-saturated (2E)-enoyl-CoA. Its pathway is lipid metabolism; fatty acid beta-oxidation. Functionally, involved in the aerobic and anaerobic degradation of long-chain fatty acids via beta-oxidation cycle. Catalyzes the formation of 3-oxoacyl-CoA from enoyl-CoA via L-3-hydroxyacyl-CoA. It can also use D-3-hydroxyacyl-CoA and cis-3-enoyl-CoA as substrate. This Acinetobacter baylyi (strain ATCC 33305 / BD413 / ADP1) protein is Fatty acid oxidation complex subunit alpha.